We begin with the raw amino-acid sequence, 262 residues long: Putative carbamate hydrolase RutD (262 aa).

This sequence belongs to the AB hydrolase superfamily. Hydrolase RutD family.

The enzyme catalyses carbamate + 2 H(+) = NH4(+) + CO2. Its function is as follows. Involved in pyrimidine catabolism. May facilitate the hydrolysis of carbamate, a reaction that can also occur spontaneously. The sequence is that of Putative carbamate hydrolase RutD from Rhizobium rhizogenes (strain K84 / ATCC BAA-868) (Agrobacterium radiobacter).